Reading from the N-terminus, the 338-residue chain is MSLLRSLRLCLVARTGSCPLSALGPGPLLPSLQAGLPLLQSPQQWHTFHSGSWLSSASSKELLMKLRRKTGYSFINCKKALETCGGDLKQAESWLHKQAQKEGWSKAARLHGRKTKEGLIGLLQEGDTTVLVEVNCETDFVSRNLKFQQLVQQVALGTLLHCQNLKDQLSTYSKGFLNSSELSELPAGPEREGSLKDQLALAIGKLGENMILKRAAWVKVPAGFYVGSYVHGAMHSPSLHNLVLGKYGALVICETSELKANLADLGRRLGQHVVGMAPLSVGSLDDEPGGEAETKMLSQPYLLDPSITLGQYVQPHGVSVVDFVRFECGEGEDAADAE.

Residues 1–55 (MSLLRSLRLCLVARTGSCPLSALGPGPLLPSLQAGLPLLQSPQQWHTFHSGSWLS) constitute a mitochondrion transit peptide. Residues lysine 89, lysine 146, and lysine 205 each carry the N6-succinyllysine modification. Residue serine 283 is modified to Phosphoserine.

Belongs to the EF-Ts family.

The protein localises to the mitochondrion. In terms of biological role, associates with the EF-Tu.GDP complex and induces the exchange of GDP to GTP. It remains bound to the aminoacyl-tRNA.EF-Tu.GTP complex up to the GTP hydrolysis stage on the ribosome. This Bos taurus (Bovine) protein is Elongation factor Ts, mitochondrial.